The primary structure comprises 141 residues: Hemoglobin subunit alpha-1/2 (141 aa).

Residues 1-141 form the Globin domain; the sequence is VLSPADKTNV…VSTVLTSKYR (141 aa). Serine 3 is subject to Phosphoserine. N6-succinyllysine is present on lysine 7. Threonine 8 is modified (phosphothreonine). Lysine 11 carries the N6-succinyllysine modification. Lysine 16 is subject to N6-acetyllysine; alternate. Lysine 16 bears the N6-succinyllysine; alternate mark. Phosphotyrosine is present on tyrosine 24. A Phosphoserine modification is found at serine 35. An N6-succinyllysine modification is found at lysine 40. Serine 49 is subject to Phosphoserine. Residue histidine 58 coordinates O2. Histidine 87 contributes to the heme b binding site. Position 102 is a phosphoserine (serine 102). Threonine 108 is subject to Phosphothreonine. Phosphoserine is present on residues serine 124 and serine 131. A phosphothreonine mark is found at threonine 134 and threonine 137. Serine 138 is modified (phosphoserine).

Belongs to the globin family. As to quaternary structure, heterotetramer of two alpha chains and two beta chains. Red blood cells.

Involved in oxygen transport from the lung to the various peripheral tissues. This is Hemoglobin subunit alpha-1/2 from Macaca sinica (Toque macaque).